A 695-amino-acid chain; its full sequence is Calcium-binding acidic-repeat protein (695 aa).

Residues 1–20 constitute a signal peptide (or 23); it reads MSHLWCWLFLVLCLACLVLS. TSP type-3 repeat units lie at residues 24–38, 47–56, 70–82, 184–196, 202–214, and 248–260; these read KDSD…DEIN, ADSDQDGLTD, KDTD…DGVE, GDSD…DGAE, and KDSD…DEEE. Residues 45 to 695 are disordered; the sequence is YNADSDQDGL…TDPWRSDHSV (651 aa). Residues 59–70 are compositionally biased toward basic and acidic residues; that stretch reads EVNRHQTHPQDK. Composition is skewed to acidic residues over residues 271-283, 291-306, and 313-324; these read ADSD…DGEE, PEDP…DGDE, and DPEEDDSDEDGV. TSP type-3 repeat units follow at residues 294-308, 317-329, 340-352, 363-375, 379-393, 402-414, 425-437, 470-482, 493-505, 516-528, 539-551, 555-569, 600-609, 623-635, and 646-658; these read PDSD…DEVN, DDSD…DGAE, EDSD…DGAE, TDSD…DEVA, ADSD…DGAE, KDTD…DGVE, EDTD…DGAE, ADTD…DGAE, GDSD…DAAE, KDSD…DEVR, and RDTDGDGVAD. 2 stretches are compositionally biased toward acidic residues: residues 361 to 370 and 381 to 392; these read NDEDSDDDGI and SDGDGLPDEDEV. Composition is skewed to acidic residues over residues 467 to 477 and 491 to 500; these read PNDEDTDDDGL and EDADTDDDGL. Residues 537–546 are compositionally biased toward acidic residues; it reads NDGDSDDDGV. Residues 589–603 are compositionally biased toward basic and acidic residues; that stretch reads EILKHKTDPRNRDTD. Basic and acidic residues predominate over residues 665-679; the sequence is NAKDGDSDDDGKADG.

It is found in the secreted. The protein resides in the endoplasmic reticulum. May function as a calcium-binding protein. In Euglena gracilis, this protein is Calcium-binding acidic-repeat protein.